The primary structure comprises 320 residues: Cytochrome c biogenesis protein CcsA (320 aa).

Helical transmembrane passes span 9 to 29 (ILAH…WGTL), 36 to 56 (LSSS…GLLI), 70 to 90 (LYES…LLEV), 97 to 117 (WLGA…TLGL), 143 to 163 (ILFS…LLVI), 227 to 247 (AIGL…IWAN), 254 to 274 (WSWD…AIYL), and 288 to 308 (AIVA…VNLL).

This sequence belongs to the CcmF/CycK/Ccl1/NrfE/CcsA family. May interact with Ccs1.

The protein resides in the plastid. It is found in the chloroplast thylakoid membrane. Its function is as follows. Required during biogenesis of c-type cytochromes (cytochrome c6 and cytochrome f) at the step of heme attachment. The sequence is that of Cytochrome c biogenesis protein CcsA from Pinus thunbergii (Japanese black pine).